A 488-amino-acid polypeptide reads, in one-letter code: MAEATDVVLVGGGIMSATLGVLLKELEPSWEITLIERLEDVALESSNAWNNAGTGHSALCELNYAPLGANGIIDPARALNIAEQFHVSRQFWATLVAEGKLEDNSFINAVPHMSLVMNEDHCSYLQKRYDAFKTQKLFENMEFSTDRNKISDWAPLMMRGRDENQPVAANYSAEGTDVDFGRLTRQMVKYLQGKGVKTEFNRHVEDIKRESDGAWVLKTADTRNPDGQLTLRTRFLFLGAGGGALTLLQKSGIPEGKGYGGFPVSGLFFRNSNPETAEQHNAKVYGQASVGAPPMSVPHLDTRNVDGKRHLMFGPYAGFRSNFLKQGSLMDLPLSIHMDNLYPMLCAGWANMPLTKYLLGELRKTKEERFASLLEYYPEANPDDWELITAGQRVQIIKKDSEKGGVLQFGTEIVAHADGSLAALLGASPGASTAVPLMIRLMHQCFPERAPSWEDRLKELVPGYGIKLNENPERADEIIAYTAKVLDI.

Belongs to the MQO family. It depends on FAD as a cofactor.

It catalyses the reaction (S)-malate + a quinone = a quinol + oxaloacetate. It functions in the pathway carbohydrate metabolism; tricarboxylic acid cycle; oxaloacetate from (S)-malate (quinone route): step 1/1. The polypeptide is Probable malate:quinone oxidoreductase (Neisseria meningitidis serogroup B (strain ATCC BAA-335 / MC58)).